Consider the following 156-residue polypeptide: Probable cyclic pyranopterin monophosphate synthase (156 aa).

Substrate is bound at residue 109 to 110; the sequence is MD. Residue Asp-124 is part of the active site.

It belongs to the MoaC family. Homohexamer; trimer of dimers.

It catalyses the reaction (8S)-3',8-cyclo-7,8-dihydroguanosine 5'-triphosphate = cyclic pyranopterin phosphate + diphosphate. Its pathway is cofactor biosynthesis; molybdopterin biosynthesis. Its function is as follows. Catalyzes the conversion of (8S)-3',8-cyclo-7,8-dihydroguanosine 5'-triphosphate to cyclic pyranopterin monophosphate (cPMP). This chain is Probable cyclic pyranopterin monophosphate synthase, found in Methanopyrus kandleri (strain AV19 / DSM 6324 / JCM 9639 / NBRC 100938).